We begin with the raw amino-acid sequence, 179 residues long: M-zodatoxin-Lt4b (179 aa).

An N-terminal signal peptide occupies residues Met-1–Ser-22. A propeptide spanning residues Glu-23–Arg-43 is cleaved from the precursor. A Processing quadruplet motif 1 motif is present at residues Glu-40–Arg-43. Glutamine amide is present on Gln-61. The short motif at Arg-63–Ser-66 is the Inverted processing quadruplet motif 1 element. Positions Arg-63–Arg-71 are excised as a propeptide. Positions Asp-68–Arg-71 match the Processing quadruplet motif 2 motif. Gln-89 is subject to Glutamine amide. Residues Arg-91–Thr-94 carry the Inverted processing quadruplet motif 2 motif. Positions Arg-91–Arg-99 are excised as a propeptide. The Processing quadruplet motif 3 motif lies at Glu-96–Arg-99. At Gln-117 the chain carries Glutamine amide. An Inverted processing quadruplet motif 3 motif is present at residues Arg-119–Ser-122. Residues Arg-119–Arg-127 constitute a propeptide that is removed on maturation. The Processing quadruplet motif 4 motif lies at Glu-124 to Arg-127. Gln-145 is modified (glutamine amide). Residues Arg-147–Thr-150 carry the Inverted processing quadruplet motif 4 motif. The propeptide occupies Arg-147–Arg-154. Positions Glu-151–Arg-154 match the Processing quadruplet motif 5 motif. The residue at position 178 (Phe-178) is a Phenylalanine amide.

It belongs to the cationic peptide 03 (latarcin) family. 04 subfamily. Post-translationally, cleavage of the propeptide depends on the processing quadruplet motif (PQM) (XXXR, with at least one of X being E) and the inverted PQM (RXXX, with at least one of X being E). Expressed by the venom gland.

The protein localises to the secreted. Its function is as follows. M-zodatoxin-Lt4b: Has antimicrobial activity against Gram-positive bacteria (A.globiformis VKM Ac-1112 (MIC=0.3 uM), and B.subtilis VKM B-501 (MIC=1.1 uM)), Gram-negative bacteria (E.coli DH5-alpha (MIC=4.4 uM), E.coli MH1 (MIC=4.4 uM), and P.aeruginosa PAO1 (MIC=&gt;35 uM)), and yeasts (P.pastoris GS115 (MIC=&gt;35 uM), and S.cerevisiae Y190 (MIC=35 uM)). Does not have hemolytic activity against rabbit erythrocytes. Causes paralysis, but is not lethal when injected into insect (M.domestica) larvae. In terms of biological role, shows no antimicrobial activity against Gram-positive bacterium B.subtilis B-501 or Gram-negative bacterium E.coli DH5-alpha at concentration up to 20 uM. The sequence is that of M-zodatoxin-Lt4b from Lachesana tarabaevi (Spider).